The primary structure comprises 178 residues: MKQLLDFLPLVVFFVVYKMYDIFYASGALIAATGLAVAMTYFIYRKVEKASLITFIMVAVFGTLTLAFHSDLFIKWKVTVIYALFALALLGSQWFMKKPLIQKMLGKELILPDLVWNKLNMAWALFFTACALANIYVAFWLPQDVWVNFKVFGLTALTLVFTVLSVVYIYRHLPREQK.

Helical transmembrane passes span 22–42 (IFYA…MTYF), 50–70 (ASLI…AFHS), 72–92 (LFIK…LLGS), 121–141 (MAWA…AFWL), and 149–169 (FKVF…VVYI).

It belongs to the YciB family.

The protein resides in the cell inner membrane. Its function is as follows. Plays a role in cell envelope biogenesis, maintenance of cell envelope integrity and membrane homeostasis. This Photorhabdus laumondii subsp. laumondii (strain DSM 15139 / CIP 105565 / TT01) (Photorhabdus luminescens subsp. laumondii) protein is Inner membrane-spanning protein YciB.